A 499-amino-acid polypeptide reads, in one-letter code: Cytochrome P450 77A1 (499 aa).

Cysteine 443 contributes to the heme binding site.

Belongs to the cytochrome P450 family. Heme is required as a cofactor.

The sequence is that of Cytochrome P450 77A1 (CYP77A1) from Solanum melongena (Eggplant).